Reading from the N-terminus, the 185-residue chain is UPF0149 protein PFL_5969 (185 aa).

The protein belongs to the UPF0149 family.

The polypeptide is UPF0149 protein PFL_5969 (Pseudomonas fluorescens (strain ATCC BAA-477 / NRRL B-23932 / Pf-5)).